A 62-amino-acid chain; its full sequence is MTIAFQLAVFALIATSSILLISVPVVFASSDGWSSNKNIVFSGTSLWIGLVFLVAILNSLIS.

Transmembrane regions (helical) follow at residues 8 to 28 and 41 to 61; these read AVFALIATSSILLISVPVVFA and FSGTSLWIGLVFLVAILNSLI.

The protein belongs to the PsbZ family. In terms of assembly, PSII is composed of 1 copy each of membrane proteins PsbA, PsbB, PsbC, PsbD, PsbE, PsbF, PsbH, PsbI, PsbJ, PsbK, PsbL, PsbM, PsbT, PsbY, PsbZ, Psb30/Ycf12, at least 3 peripheral proteins of the oxygen-evolving complex and a large number of cofactors. It forms dimeric complexes.

The protein resides in the plastid. It localises to the chloroplast thylakoid membrane. Functionally, may control the interaction of photosystem II (PSII) cores with the light-harvesting antenna, regulates electron flow through the 2 photosystem reaction centers. PSII is a light-driven water plastoquinone oxidoreductase, using light energy to abstract electrons from H(2)O, generating a proton gradient subsequently used for ATP formation. The sequence is that of Photosystem II reaction center protein Z from Amborella trichopoda.